The following is a 536-amino-acid chain: Membrane protein insertase YidC (536 aa).

A helical transmembrane segment spans residues 14–34 (ILIATAISLLFFIPYSYFFAP). The segment at 43 to 69 (STSMERAEQQAAPQTSSSPKEGQVSSV) is disordered. Over residues 53 to 68 (AAPQTSSSPKEGQVSS) the composition is skewed to polar residues. A run of 5 helical transmembrane segments spans residues 312–332 (VVEYGFITFFAKPLFLLLDWL), 339–359 (WGWAIVLLTLVVRIILFPLTY), 401–421 (GANPMGGCLPLLLQMPIFFAI), 436–456 (WILWINDLSVMDPYFILPILM), and 484–504 (PLIFTFFFVTFPSGLVLYWFV).

Belongs to the OXA1/ALB3/YidC family. Type 1 subfamily. In terms of assembly, interacts with the Sec translocase complex via SecD. Specifically interacts with transmembrane segments of nascent integral membrane proteins during membrane integration.

Its subcellular location is the cell inner membrane. Required for the insertion and/or proper folding and/or complex formation of integral membrane proteins into the membrane. Involved in integration of membrane proteins that insert both dependently and independently of the Sec translocase complex, as well as at least some lipoproteins. Aids folding of multispanning membrane proteins. This is Membrane protein insertase YidC from Wolinella succinogenes (strain ATCC 29543 / DSM 1740 / CCUG 13145 / JCM 31913 / LMG 7466 / NCTC 11488 / FDC 602W) (Vibrio succinogenes).